Consider the following 473-residue polypeptide: Sulfate adenylyltransferase subunit 1 (473 aa).

In terms of domain architecture, tr-type G spans 19–238 (KTLLKFLTCG…IKIKNSISSE (220 aa)). The tract at residues 28 to 35 (GSVDDGKS) is G1. Position 28–35 (28–35 (GSVDDGKS)) interacts with GTP. Residues 86 to 90 (GITID) are G2. The tract at residues 107–110 (DTPG) is G3. GTP-binding positions include 107–111 (DTPGH) and 162–165 (NKMD). Positions 162–165 (NKMD) are G4. The interval 200–202 (SAL) is G5.

The protein belongs to the TRAFAC class translation factor GTPase superfamily. Classic translation factor GTPase family. CysN/NodQ subfamily. In terms of assembly, heterodimer composed of CysD, the smaller subunit, and CysN.

It carries out the reaction sulfate + ATP + H(+) = adenosine 5'-phosphosulfate + diphosphate. It participates in sulfur metabolism; hydrogen sulfide biosynthesis; sulfite from sulfate: step 1/3. In terms of biological role, with CysD forms the ATP sulfurylase (ATPS) that catalyzes the adenylation of sulfate producing adenosine 5'-phosphosulfate (APS) and diphosphate, the first enzymatic step in sulfur assimilation pathway. APS synthesis involves the formation of a high-energy phosphoric-sulfuric acid anhydride bond driven by GTP hydrolysis by CysN coupled to ATP hydrolysis by CysD. The chain is Sulfate adenylyltransferase subunit 1 from Buchnera aphidicola subsp. Acyrthosiphon pisum (strain 5A).